A 414-amino-acid chain; its full sequence is STAGA complex 65 subunit gamma (414 aa).

Residues 87-108 are disordered; that stretch reads NQQQTEGVKTEESEPLPSCPGS. Phosphoserine is present on serine 108. Lysine 271 participates in a covalent cross-link: Glycyl lysine isopeptide (Lys-Gly) (interchain with G-Cter in SUMO2). Phosphoserine occurs at positions 323 and 334. A disordered region spans residues 346-414; the sequence is PQESEEGNVS…QRCKKRMRKI (69 aa). Positions 386-395 are enriched in low complexity; it reads SSYGSHSTDS.

Component of the STAGA transcription coactivator-HAT complex, at least composed of SUPT3H, SUPT7L, GCN5L2, TAF5L, TAF6L, TADA3L, TAD1L, TAF10, TAF12 and TAF9. In terms of processing, sumoylated. As to expression, expressed at high levels in adenocarcinomas and gliomas and low in esophageal cancers and malignant hematological disease. Also expressed at high level in the thymus, low in peripheral blood mononuclear cells, and lowest in the stomach, small intestine, and skeletal muscle.

It localises to the nucleus. This chain is STAGA complex 65 subunit gamma (SUPT7L), found in Homo sapiens (Human).